A 478-amino-acid chain; its full sequence is Putative indole-3-acetic acid-amido synthetase GH3.10 (478 aa).

This sequence belongs to the IAA-amido conjugating enzyme family.

May catalyze the synthesis of indole-3-acetic acid (IAA)-amino acid conjugates, providing a mechanism for the plant to cope with the presence of excess auxin. The chain is Putative indole-3-acetic acid-amido synthetase GH3.10 (GH3.10) from Oryza sativa subsp. japonica (Rice).